The chain runs to 1211 residues: DNA polymerase III subunit alpha (1211 aa).

The protein belongs to the DNA polymerase type-C family. DnaE subfamily. DNA polymerase III contains a core (composed of alpha, epsilon and theta chains) that associates with a tau subunit. This core dimerizes to form the PolIII' complex. PolIII' associates with the gamma complex (composed of gamma, delta, delta', psi and chi chains) and with the beta chain to form the complete DNA polymerase III complex.

The protein resides in the cytoplasm. It catalyses the reaction DNA(n) + a 2'-deoxyribonucleoside 5'-triphosphate = DNA(n+1) + diphosphate. Its function is as follows. DNA polymerase III is a complex, multichain enzyme responsible for most of the replicative synthesis in bacteria. This DNA polymerase also exhibits 3' to 5' exonuclease activity. The alpha chain is the DNA polymerase. The protein is DNA polymerase III subunit alpha (dnaE) of Helicobacter pylori (strain J99 / ATCC 700824) (Campylobacter pylori J99).